A 277-amino-acid chain; its full sequence is Glutamate racemase (277 aa).

Residues 13–14 and 45–46 contribute to the substrate site; these read DS and YG. Cysteine 77 acts as the Proton donor/acceptor in catalysis. 78-79 lines the substrate pocket; that stretch reads NT. The active-site Proton donor/acceptor is cysteine 192. 193–194 is a substrate binding site; sequence TH.

This sequence belongs to the aspartate/glutamate racemases family.

It catalyses the reaction L-glutamate = D-glutamate. It participates in cell wall biogenesis; peptidoglycan biosynthesis. Functionally, provides the (R)-glutamate required for cell wall biosynthesis. The polypeptide is Glutamate racemase (Rhizobium meliloti (strain 1021) (Ensifer meliloti)).